A 373-amino-acid polypeptide reads, in one-letter code: Flagellar P-ring protein 1 (373 aa).

The N-terminal stretch at Met1–Ala25 is a signal peptide.

The protein belongs to the FlgI family. As to quaternary structure, the basal body constitutes a major portion of the flagellar organelle and consists of four rings (L,P,S, and M) mounted on a central rod.

The protein resides in the periplasm. It localises to the bacterial flagellum basal body. Its function is as follows. Assembles around the rod to form the L-ring and probably protects the motor/basal body from shearing forces during rotation. This Vibrio parahaemolyticus serotype O3:K6 (strain RIMD 2210633) protein is Flagellar P-ring protein 1.